A 580-amino-acid polypeptide reads, in one-letter code: Laccase-6 (580 aa).

Positions 1 to 22 are cleaved as a signal peptide; it reads MSCSWMIPVFAILAFVASAAQA. 2 Plastocyanin-like domains span residues 30 to 148 and 158 to 317; these read NVAT…PRRA and EEKT…YVDA. 2 N-linked (GlcNAc...) asparagine glycosylation sites follow: asparagine 44 and asparagine 78. Cu cation-binding residues include histidine 82, histidine 84, histidine 127, and histidine 129. Asparagine 306, asparagine 335, asparagine 385, asparagine 397, and asparagine 462 each carry an N-linked (GlcNAc...) asparagine glycan. Residues 424–564 form the Plastocyanin-like 3 domain; the sequence is DFPDQPPVAF…AMVFEVESGP (141 aa). Histidine 480, histidine 483, histidine 485, histidine 543, cysteine 544, histidine 545, and histidine 549 together coordinate Cu cation.

The protein belongs to the multicopper oxidase family. Cu cation is required as a cofactor.

It is found in the secreted. The protein resides in the extracellular space. The protein localises to the apoplast. The catalysed reaction is 4 hydroquinone + O2 = 4 benzosemiquinone + 2 H2O. Lignin degradation and detoxification of lignin-derived products. In Oryza sativa subsp. japonica (Rice), this protein is Laccase-6 (LAC6).